We begin with the raw amino-acid sequence, 335 residues long: uncharacterized protein (335 aa).

Disordered stretches follow at residues 153–174 (LNDK…SDRI), 218–239 (HTSV…QEEV), and 254–295 (RCKV…PVTS). Acidic residues predominate over residues 156–170 (KEDEEKLDQTTESEE). Composition is skewed to low complexity over residues 222–234 (RRSM…SASS) and 275–295 (THTS…PVTS).

This is an uncharacterized protein from Caenorhabditis elegans.